The chain runs to 170 residues: MYTSKQPFLKSKQPFSKSKQTFNKSKQPFRKSKQTFRKFKQPFRKSKQPFRRRPRIGPGDRIDYRNMSLINRFISEQGKILSRRINRLTLKQQRLITLAIKQARILSFLPFRNYENEKQFQAQSISIITGSRPRKNRHIPQLTQKYNSNRNLRNYNQNLRNNNRNLSSDC.

Residues Met-1–Arg-61 are disordered. A compositionally biased stretch (polar residues) spans Gln-13–Lys-26. The segment covering Gln-27–Arg-55 has biased composition (basic residues).

Belongs to the bacterial ribosomal protein bS18 family. Part of the 30S ribosomal subunit.

It localises to the plastid. The protein resides in the chloroplast. In Hordeum vulgare (Barley), this protein is Small ribosomal subunit protein bS18c.